A 207-amino-acid chain; its full sequence is Sodium/potassium-transporting ATPase subunit beta-1-interacting protein 1 (207 aa).

The next 3 helical transmembrane spans lie at 2–22 (GRCSGRCTLVGICCLQLAAAL), 35–55 (APILANFLHIMVVILGILGTL), and 62–82 (LILYSIWLALWVAWNAFIICF). N100 carries an N-linked (GlcNAc...) asparagine glycan. The chain crosses the membrane as a helical span at residues 147 to 167 (ALSSALQIFLALFGFVYACYV).

This sequence belongs to the NKAIN family. In terms of assembly, interacts with atp1b1 C-terminus.

It is found in the cell membrane. The polypeptide is Sodium/potassium-transporting ATPase subunit beta-1-interacting protein 1 (nkain1) (Xenopus tropicalis (Western clawed frog)).